The sequence spans 411 residues: Lissencephaly-1 homolog (411 aa).

The LisH domain occupies Q9–T41. Positions T56–A83 form a coiled coil. 7 WD repeats span residues G106–K147, G148–K187, G191–T230, G233–E272, D275–T334, G337–T376, and A379–R411.

It belongs to the WD repeat LIS1/nudF family.

It localises to the cytoplasm. Its subcellular location is the cytoskeleton. It is found in the microtubule organizing center. The protein resides in the centrosome. Positively regulates the activity of the minus-end directed microtubule motor protein dynein. May enhance dynein-mediated microtubule sliding by targeting dynein to the microtubule plus end. Required for several dynein- and microtubule-dependent processes. This is Lissencephaly-1 homolog from Drosophila persimilis (Fruit fly).